The primary structure comprises 363 residues: Cleavage and termination factor 1 (363 aa).

An RRM domain is found at 7–85 (NVVFVGNIPY…RKIRVEFPSN (79 aa)). A disordered region spans residues 291 to 325 (QPASATSSPPSVPQKIPSSNHKSQQANGSDQGNEG). Polar residues predominate over residues 306 to 322 (IPSSNHKSQQANGSDQG).

As to quaternary structure, interacts with res2.

Its subcellular location is the nucleus. Functionally, component of the cleavage factor I (CF I) involved in pre-mRNA 3'-end processing. In Schizosaccharomyces pombe (strain 972 / ATCC 24843) (Fission yeast), this protein is Cleavage and termination factor 1 (ctf1).